Here is a 339-residue protein sequence, read N- to C-terminus: Methylglutaconyl-CoA hydratase, mitochondrial (339 aa).

The transit peptide at 1–67 directs the protein to the mitochondrion; that stretch reads MAAAVAAAPG…AGGPAPKRGY (67 aa). Lysine 100 carries the N6-acetyllysine; alternate modification. Lysine 100 is modified (N6-succinyllysine; alternate). The interval 105–119 is RNA-binding; it reads KNLIKMLSKAVDALK. At lysine 109 the chain carries N6-succinyllysine. 2 positions are modified to N6-acetyllysine; alternate: lysine 113 and lysine 144. 2 positions are modified to N6-succinyllysine; alternate: lysine 113 and lysine 144. An N6-succinyllysine mark is found at lysine 148 and lysine 160. Lysine 204 and lysine 211 each carry N6-acetyllysine; alternate. Residues lysine 204 and lysine 211 each carry the N6-succinyllysine; alternate modification. Position 329 is an N6-succinyllysine (lysine 329).

Belongs to the enoyl-CoA hydratase/isomerase family. In terms of assembly, homohexamer.

Its subcellular location is the mitochondrion. It catalyses the reaction (3S)-3-hydroxy-3-methylglutaryl-CoA = 3-methyl-(2E)-glutaconyl-CoA + H2O. The enzyme catalyses (3S)-citramalyl-CoA = itaconyl-CoA + H2O. It carries out the reaction 3-hydroxyisovaleryl-CoA = 3-methylbut-2-enoyl-CoA + H2O. The catalysed reaction is (S)-3-hydroxyglutaryl-CoA = (2E)-glutaconyl-CoA + H2O. It participates in amino-acid degradation; L-leucine degradation; (S)-3-hydroxy-3-methylglutaryl-CoA from 3-isovaleryl-CoA: step 3/3. Functionally, catalyzes the fifth step in the leucine degradation pathway, the reversible hydration of 3-methylglutaconyl-CoA (3-MG-CoA) to 3-hydroxy-3-methylglutaryl-CoA (HMG-CoA). Can catalyze the reverse reaction but at a much lower rate in vitro. HMG-CoA is then quickly degraded by another enzyme (such as HMG-CoA lyase) to give acetyl-CoA and acetoacetate. Uses other substrates such as (2E)-glutaconyl-CoA efficiently in vitro, and to a lesser extent 3-methylcrotonyl-CoA (3-methyl-(2E)-butenoyl-CoA), crotonyl-CoA ((2E)-butenoyl-CoA) and 3-hydroxybutanoyl-CoA (the missing carboxylate reduces affinity to the active site). Originally it was identified as an RNA-binding protein as it binds to AU-rich elements (AREs) in vitro. AREs direct rapid RNA degradation and mRNA deadenylation. Might have itaconyl-CoA hydratase activity, converting itaconyl-CoA into citramalyl-CoA in the C5-dicarboxylate catabolism pathway. The C5-dicarboxylate catabolism pathway is required to detoxify itaconate, an antimicrobial metabolite and immunomodulator produced by macrophages during certain infections, that can act as a vitamin B12-poisoning metabolite. This Homo sapiens (Human) protein is Methylglutaconyl-CoA hydratase, mitochondrial (AUH).